We begin with the raw amino-acid sequence, 392 residues long: MAVIKMTDLDLKGKRVLIREDLNVPLKEGKVADDTRIRASLPTIRHALESGARVMLLSHLGRPKEGEPDPAASLRPVAEHLATLLGQEVPLAEDWLDGVEVAEGQAVLCENVRFNVGEKANDEALAKRMAALCDVYVMDAFGTAHRAQASTHGVGQYAPVACAGPLLAAELEALGKALEAPARPMTAIVGGSKVSTKLDVLETLSEKVDQLIVGGGIANTFIAAAGHPVGKSLYEADLVDKARQLMDTARANGGEIPVPTDVVVGREFSADTQAVVKRVDEVDDEDMIFDIGPETAQRYAGMMREAGTIVWNGPVGVFEFDQFGEGTRKLGEAIAESDGFSIAGGGDTVAAVEKYGLADRISYISTGGGAFLEFLEGKTLPAVAMLEARASD.

Residues 21 to 23 (DLN), Arg-36, 59 to 62 (HLGR), Arg-113, and Arg-146 each bind substrate. ATP-binding positions include Lys-197, Glu-319, and 345–348 (GGDT).

It belongs to the phosphoglycerate kinase family. In terms of assembly, monomer.

It is found in the cytoplasm. The enzyme catalyses (2R)-3-phosphoglycerate + ATP = (2R)-3-phospho-glyceroyl phosphate + ADP. It participates in carbohydrate degradation; glycolysis; pyruvate from D-glyceraldehyde 3-phosphate: step 2/5. The sequence is that of Phosphoglycerate kinase from Alkalilimnicola ehrlichii (strain ATCC BAA-1101 / DSM 17681 / MLHE-1).